The following is a 148-amino-acid chain: Large ribosomal subunit protein uL15 (148 aa).

The span at 1-12 (MSEPIKLHDLRP) shows a compositional bias: basic and acidic residues. Positions 1-52 (MSEPIKLHDLRPAKGANKPKTRVGRGEASKGKTAGRGTKGTKARKQVSAAFE) are disordered.

It belongs to the universal ribosomal protein uL15 family. As to quaternary structure, part of the 50S ribosomal subunit.

In terms of biological role, binds to the 23S rRNA. In Corynebacterium diphtheriae (strain ATCC 700971 / NCTC 13129 / Biotype gravis), this protein is Large ribosomal subunit protein uL15.